Here is a 434-residue protein sequence, read N- to C-terminus: Enolase (434 aa).

Gln-163 is a binding site for (2R)-2-phosphoglycerate. Glu-205 functions as the Proton donor in the catalytic mechanism. Asp-243, Glu-291, and Asp-318 together coordinate Mg(2+). (2R)-2-phosphoglycerate is bound by residues Lys-343, Arg-372, Ser-373, and Lys-394. Catalysis depends on Lys-343, which acts as the Proton acceptor.

It belongs to the enolase family. The cofactor is Mg(2+).

The protein resides in the cytoplasm. The protein localises to the secreted. It is found in the cell surface. The enzyme catalyses (2R)-2-phosphoglycerate = phosphoenolpyruvate + H2O. It participates in carbohydrate degradation; glycolysis; pyruvate from D-glyceraldehyde 3-phosphate: step 4/5. Functionally, catalyzes the reversible conversion of 2-phosphoglycerate (2-PG) into phosphoenolpyruvate (PEP). It is essential for the degradation of carbohydrates via glycolysis. The protein is Enolase of Fusobacterium nucleatum subsp. nucleatum (strain ATCC 25586 / DSM 15643 / BCRC 10681 / CIP 101130 / JCM 8532 / KCTC 2640 / LMG 13131 / VPI 4355).